The chain runs to 266 residues: Tropinone reductase homolog At1g07440 (266 aa).

18-42 (LVTGGTKGIGHAIVEEFAGFGAVIH) contacts NADP(+). Ser151 contributes to the substrate binding site. The Proton acceptor role is filled by Tyr164.

The protein belongs to the short-chain dehydrogenases/reductases (SDR) family. SDR65C subfamily.

This is Tropinone reductase homolog At1g07440 from Arabidopsis thaliana (Mouse-ear cress).